The following is a 1296-amino-acid chain: ABC transporter B family member 21 (1296 aa).

Residues 1–59 (MDSVIESEEGLKVDSPNRADAETSNSKIHEEDEKELKTESDLKEEKKKTEKNKQEEDEK) form a disordered region. A compositionally biased stretch (basic and acidic residues) spans 9-59 (EGLKVDSPNRADAETSNSKIHEEDEKELKTESDLKEEKKKTEKNKQEEDEK). Residues 77-97 (IILMILGTIGAVGNGLGFPIM) traverse the membrane as a helical segment. An ABC transmembrane type-1 1 domain is found at 80–368 (MILGTIGAVG…ASPCLSAFAA (289 aa)). Asparagine 113 carries an N-linked (GlcNAc...) asparagine glycan. A run of 5 helical transmembrane segments spans residues 128–148 (FVYL…GWMI), 205–225 (IQLV…GWLL), 227–247 (LVMV…AIVI), 307–327 (GLGL…AVWY), and 336–356 (GYTG…SMSL). The region spanning 403-639 (IELNNVNFSY…PEGAYSQLIR (237 aa)) is the ABC transporter 1 domain. N-linked (GlcNAc...) asparagine glycosylation is present at asparagine 409. 438–445 (GQSGSGKS) lines the ATP pocket. N-linked (GlcNAc...) asparagine glycosylation is found at asparagine 505, asparagine 519, and asparagine 590. The span at 640–662 (LQEDTKQTEDSTDEQKLSMESMK) shows a compositional bias: basic and acidic residues. Residues 640 to 672 (LQEDTKQTEDSTDEQKLSMESMKRSSLRKSSLS) are disordered. Residues serine 657 and serine 660 each carry the phosphoserine modification. The ABC transmembrane type-1 2 domain occupies 730-1017 (LILGSIAAVL…SSSLSPDSSK (288 aa)). The next 2 membrane-spanning stretches (helical) occupy residues 731-751 (ILGS…GILI) and 774-794 (IIFM…TIFF). Asparagine 826 carries an N-linked (GlcNAc...) asparagine glycan. 3 helical membrane-spanning segments follow: residues 865 to 885 (VIAF…LPLI), 952 to 972 (GIVS…SYAA), and 986 to 1006 (TTFD…VAIS). Positions 1052–1289 (IELRHISFKY…KDGVYASLVQ (238 aa)) constitute an ABC transporter 2 domain. 1087 to 1094 (GESGSGKS) is an ATP binding site. N-linked (GlcNAc...) asparagine glycans are attached at residues asparagine 1141 and asparagine 1240.

This sequence belongs to the ABC transporter superfamily. ABCB family. Multidrug resistance exporter (TC 3.A.1.201) subfamily.

It is found in the membrane. The protein is ABC transporter B family member 21 (ABCB21) of Arabidopsis thaliana (Mouse-ear cress).